A 411-amino-acid polypeptide reads, in one-letter code: Adenylosuccinate synthetase (411 aa).

GTP-binding positions include 11-17 and 39-41; these read GDEGKGK and GHT. Aspartate 12 acts as the Proton acceptor in catalysis. Positions 12 and 39 each coordinate Mg(2+). IMP is bound by residues 12 to 15, 37 to 40, threonine 121, arginine 135, glutamine 215, threonine 230, and arginine 294; these read DEGK and NAGH. Histidine 40 acts as the Proton donor in catalysis. 290-296 lines the substrate pocket; it reads TTTKRPR. Residues arginine 296, 322 to 324, and 400 to 402 each bind GTP; these read KLD and STS.

This sequence belongs to the adenylosuccinate synthetase family. As to quaternary structure, homodimer. The cofactor is Mg(2+).

The protein resides in the cytoplasm. The enzyme catalyses IMP + L-aspartate + GTP = N(6)-(1,2-dicarboxyethyl)-AMP + GDP + phosphate + 2 H(+). The protein operates within purine metabolism; AMP biosynthesis via de novo pathway; AMP from IMP: step 1/2. Its function is as follows. Plays an important role in the de novo pathway of purine nucleotide biosynthesis. Catalyzes the first committed step in the biosynthesis of AMP from IMP. The chain is Adenylosuccinate synthetase from Helicobacter pylori (strain ATCC 700392 / 26695) (Campylobacter pylori).